Consider the following 112-residue polypeptide: Putative transposase YkgN (112 aa).

This sequence belongs to the transposase 8 family.

The sequence is that of Putative transposase YkgN (ykgN) from Escherichia coli (strain K12).